Here is a 159-residue protein sequence, read N- to C-terminus: SsrA-binding protein (159 aa).

The tract at residues 134–159 is disordered; it reads KLHDKRETSKERDWNRQKNRLLKERG. Over residues 137 to 159 the composition is skewed to basic and acidic residues; it reads DKRETSKERDWNRQKNRLLKERG.

The protein belongs to the SmpB family.

The protein resides in the cytoplasm. Its function is as follows. Required for rescue of stalled ribosomes mediated by trans-translation. Binds to transfer-messenger RNA (tmRNA), required for stable association of tmRNA with ribosomes. tmRNA and SmpB together mimic tRNA shape, replacing the anticodon stem-loop with SmpB. tmRNA is encoded by the ssrA gene; the 2 termini fold to resemble tRNA(Ala) and it encodes a 'tag peptide', a short internal open reading frame. During trans-translation Ala-aminoacylated tmRNA acts like a tRNA, entering the A-site of stalled ribosomes, displacing the stalled mRNA. The ribosome then switches to translate the ORF on the tmRNA; the nascent peptide is terminated with the 'tag peptide' encoded by the tmRNA and targeted for degradation. The ribosome is freed to recommence translation, which seems to be the essential function of trans-translation. The chain is SsrA-binding protein from Rhizobium meliloti (strain 1021) (Ensifer meliloti).